The following is a 502-amino-acid chain: ATP synthase subunit beta (502 aa).

An ATP-binding site is contributed by 153-160 (GGAGVGKT).

The protein belongs to the ATPase alpha/beta chains family. In terms of assembly, F-type ATPases have 2 components, CF(1) - the catalytic core - and CF(0) - the membrane proton channel. CF(1) has five subunits: alpha(3), beta(3), gamma(1), delta(1), epsilon(1). CF(0) has three main subunits: a(1), b(2) and c(9-12). The alpha and beta chains form an alternating ring which encloses part of the gamma chain. CF(1) is attached to CF(0) by a central stalk formed by the gamma and epsilon chains, while a peripheral stalk is formed by the delta and b chains.

It localises to the cell membrane. It catalyses the reaction ATP + H2O + 4 H(+)(in) = ADP + phosphate + 5 H(+)(out). Produces ATP from ADP in the presence of a proton gradient across the membrane. The catalytic sites are hosted primarily by the beta subunits. This is ATP synthase subunit beta from Amoebophilus asiaticus (strain 5a2).